The primary structure comprises 688 residues: Hid-1 family protein P19A11.07c (688 aa).

The protein belongs to the hid-1 family.

The protein localises to the cytoplasm. It localises to the nucleus. This Schizosaccharomyces pombe (strain 972 / ATCC 24843) (Fission yeast) protein is Hid-1 family protein P19A11.07c.